The primary structure comprises 75 residues: ATP synthase subunit 9, mitochondrial (75 aa).

Transmembrane regions (helical) follow at residues 10–30 (LVLG…GILF) and 55–75 (FALV…VYFI).

Belongs to the ATPase C chain family. As to quaternary structure, F-type ATPases have 2 components, CF(1) - the catalytic core - and CF(0) - the membrane proton channel. CF(1) has five subunits: alpha(3), beta(3), gamma(1), delta(1), epsilon(1). CF(0) has three main subunits: a, b and c.

It localises to the mitochondrion membrane. Functionally, mitochondrial membrane ATP synthase (F(1)F(0) ATP synthase or Complex V) produces ATP from ADP in the presence of a proton gradient across the membrane which is generated by electron transport complexes of the respiratory chain. F-type ATPases consist of two structural domains, F(1) - containing the extramembraneous catalytic core and F(0) - containing the membrane proton channel, linked together by a central stalk and a peripheral stalk. During catalysis, ATP synthesis in the catalytic domain of F(1) is coupled via a rotary mechanism of the central stalk subunits to proton translocation. Part of the complex F(0) domain. A homomeric c-ring of probably 10 subunits is part of the complex rotary element. In Paramecium tetraurelia, this protein is ATP synthase subunit 9, mitochondrial (ATP9).